The primary structure comprises 259 residues: Isoepoxydon dehydrogenase patN (259 aa).

Asp-69, Asn-96, and Lys-125 together coordinate NADP(+). Active-site proton donor residues include Ser-143 and Ser-144. NADP(+) contacts are provided by Tyr-158, Lys-162, and Val-191. Tyr-158 (proton acceptor) is an active-site residue. Lys-162 (lowers pKa of active site Tyr) is an active-site residue.

Belongs to the short-chain dehydrogenases/reductases (SDR) family.

Its subcellular location is the cytoplasm. The protein resides in the cytosol. The enzyme catalyses isoepoxydon + NADP(+) = phyllostine + NADPH + H(+). Its pathway is mycotoxin biosynthesis; patulin biosynthesis. Functionally, isoepoxydon dehydrogenase; part of the gene cluster that mediates the biosynthesis of patulin, an acetate-derived tetraketide mycotoxin produced by several fungal species that shows antimicrobial properties against several bacteria. PatN catalyzes the conversion of isoepoxydon into phyllostine. The pathway begins with the synthesis of 6-methylsalicylic acid by the polyketide synthase (PKS) patK via condensation of acetate and malonate units. The 6-methylsalicylic acid decarboxylase patG then catalyzes the decarboxylation of 6-methylsalicylic acid to yield m-cresol (also known as 3-methylphenol). These first reactions occur in the cytosol. The intermediate m-cresol is then transported into the endoplasmic reticulum where the cytochrome P450 monooxygenase patH converts it to m-hydroxybenzyl alcohol, which is further converted to gentisyl alcohol by the cytochrome P450 monooxygenase patI. The oxidoreductases patJ and patO further convert gentisyl alcohol to isoepoxydon in the vacuole. PatN catalyzes then the transformation of isoepoxydon into phyllostine. The cluster protein patF is responsible for the conversion from phyllostine to neopatulin whereas the alcohol dehydrogenase patD converts neopatulin to E-ascladiol. The steps between isoepoxydon and E-ascladiol occur in the cytosol, and E-ascladiol is probably secreted to the extracellular space by one of the cluster-specific transporters patC or patM. Finally, the secreted patulin synthase patE catalyzes the conversion of E-ascladiol to patulin. In Penicillium expansum (Blue mold rot fungus), this protein is Isoepoxydon dehydrogenase patN.